The chain runs to 456 residues: Glycine--tRNA ligase (456 aa).

Substrate contacts are provided by arginine 98 and glutamate 168. ATP contacts are provided by residues 200-202 (RNE), 210-215 (FRTREF), 285-286 (EL), and 329-332 (GVER). 215–219 (FEQME) contacts substrate. 325-329 (EPSVG) lines the substrate pocket.

This sequence belongs to the class-II aminoacyl-tRNA synthetase family. As to quaternary structure, homodimer.

The protein localises to the cytoplasm. The catalysed reaction is tRNA(Gly) + glycine + ATP = glycyl-tRNA(Gly) + AMP + diphosphate. In terms of biological role, catalyzes the attachment of glycine to tRNA(Gly). The sequence is that of Glycine--tRNA ligase from Mycoplasma mycoides subsp. mycoides SC (strain CCUG 32753 / NCTC 10114 / PG1).